The chain runs to 93 residues: Small ribosomal subunit protein bS20 (93 aa).

Positions 1-11 (MPQHKSAEKRV) are enriched in basic and acidic residues. The tract at residues 1 to 23 (MPQHKSAEKRVRQSKRRNARNRV) is disordered. A compositionally biased stretch (basic residues) spans 12 to 23 (RQSKRRNARNRV).

Belongs to the bacterial ribosomal protein bS20 family.

Its function is as follows. Binds directly to 16S ribosomal RNA. This Chloroherpeton thalassium (strain ATCC 35110 / GB-78) protein is Small ribosomal subunit protein bS20.